The primary structure comprises 278 residues: MDVRQSIHSAHAKTLDTQGLRNEFLVEKVFVADEYTMVYSHIDRIIVGGIMPVTKTVSVGGEVGKQLGVSYFLERRELGVINIGGAGTITVGGQCYEIGHRDALYVGKGAKEVVFASIDTATPAKFYYNCAPAHTTYPTKKVTPDEVSPVTLGDNLTSNRRTINKYFVPDVLETCQLSMGLTELAPGNLWNTMPCHTHERRMEVYFYFNMDDDACVFHMMGQPQETRHIVMHNEQAVISPSWSIHSGVGTKAYTFIWGMVGENQVFDDMDHVAVKDLR.

Residues His196, His198, Glu203, and His245 each contribute to the Zn(2+) site.

This sequence belongs to the KduI family. Homohexamer. Zn(2+) serves as cofactor.

It catalyses the reaction 5-dehydro-4-deoxy-D-glucuronate = 3-deoxy-D-glycero-2,5-hexodiulosonate. It functions in the pathway glycan metabolism; pectin degradation; 2-dehydro-3-deoxy-D-gluconate from pectin: step 4/5. Catalyzes the isomerization of 5-dehydro-4-deoxy-D-glucuronate to 3-deoxy-D-glycero-2,5-hexodiulosonate. This chain is 4-deoxy-L-threo-5-hexosulose-uronate ketol-isomerase, found in Escherichia coli O127:H6 (strain E2348/69 / EPEC).